We begin with the raw amino-acid sequence, 464 residues long: Chitobiosyldiphosphodolichol beta-mannosyltransferase (464 aa).

Residues 1-2 are Lumenal-facing; the sequence is MA. A helical transmembrane segment spans residues 3-23; the sequence is ASCLVLLALCLLLPLLLLGGW. The Cytoplasmic portion of the chain corresponds to 24–99; sequence KRWRRGRAAR…ELQSLAVGPR (76 aa). The segment at residues 100 to 120 is an intramembrane region (helical); it reads VFQYGVKVVLQAMYLLWKLMW. Over 121–464 the chain is Cytoplasmic; it reads REPGAYIFLQ…QTVLPLVMDT (344 aa). At Ser242 the chain carries Phosphoserine. Positions 243–262 are disordered; that stretch reads PFRARSEPEDPVTERSAFTE.

The protein belongs to the glycosyltransferase group 1 family. Glycosyltransferase 33 subfamily.

The protein localises to the endoplasmic reticulum membrane. It carries out the reaction an N,N'-diacetylchitobiosyl-diphospho-di-trans,poly-cis-dolichol + GDP-alpha-D-mannose = a beta-D-Man-(1-&gt;4)-beta-D-GlcNAc-(1-&gt;4)-alpha-D-GlcNAc-diphospho-di-trans,poly-cis-dolichol + GDP + H(+). It functions in the pathway protein modification; protein glycosylation. Mannosyltransferase that operates in the biosynthetic pathway of dolichol-linked oligosaccharides, the glycan precursors employed in protein asparagine (N)-glycosylation. The assembly of dolichol-linked oligosaccharides begins on the cytosolic side of the endoplasmic reticulum membrane and finishes in its lumen. The sequential addition of sugars to dolichol pyrophosphate produces dolichol-linked oligosaccharides containing fourteen sugars, including two GlcNAcs, nine mannoses and three glucoses. Once assembled, the oligosaccharide is transferred from the lipid to nascent proteins by oligosaccharyltransferases. Catalyzes, on the cytoplasmic face of the endoplasmic reticulum, the addition of the first mannose residues to the dolichol-linked oligosaccharide chain, to produce Man1GlcNAc(2)-PP-dolichol core oligosaccharide. Man1GlcNAc(2)-PP-dolichol is a substrate for ALG2, the following enzyme in the biosynthetic pathway. The polypeptide is Chitobiosyldiphosphodolichol beta-mannosyltransferase (Homo sapiens (Human)).